Consider the following 390-residue polypeptide: Neuromedin-B receptor (390 aa).

Over 1–41 (MPPRSLSNLSFPTEANESELVPEVWEKDFLPDSDGTTAELV) the chain is Extracellular. 2 N-linked (GlcNAc...) asparagine glycosylation sites follow: asparagine 8 and asparagine 16. The chain crosses the membrane as a helical span at residues 42–65 (IRCVIPSLYLIIISVGLLGNIMLV). The Cytoplasmic portion of the chain corresponds to 66–79 (KIFLTNSAMRNVPN). Residues 80 to 99 (IFISNLAAGDLLLLLTCVPV) traverse the membrane as a helical segment. The Extracellular segment spans residues 100–117 (DASRYFFDEWVFGKLGCK). Cysteine 116 and cysteine 198 are oxidised to a cystine. The helical transmembrane segment at 118–139 (LIPAIQLTSVGVSVFTLTALSA) threads the bilayer. Topologically, residues 140–156 (DRYRAIVNPMDMQTSGV) are cytoplasmic. The chain crosses the membrane as a helical span at residues 157–177 (LLWTSLKAVGIWVVSVLLAVP). Residues 178 to 211 (EAVFSEVARIGSLDNSSFTACIPYPQTDELHPKI) lie on the Extracellular side of the membrane. Residue asparagine 192 is glycosylated (N-linked (GlcNAc...) asparagine). A helical transmembrane segment spans residues 212 to 235 (HSVLIFLVYFLIPLVIISIYYYHI). Topologically, residues 236–266 (AKTLIKSAHNLPGEYNEHTKKQMETRKRLAK) are cytoplasmic. The helical transmembrane segment at 267–287 (IVLVFVGCFVFCWFPNHVLYL) threads the bilayer. The Extracellular segment spans residues 288-299 (YRSFNYKEIDPS). The chain crosses the membrane as a helical span at residues 300 to 327 (LGHMIVTLVARVLSFSNSCVNPFALYLL). The Cytoplasmic segment spans residues 328–390 (SESFRKHFNS…GHSTKQEIAL (63 aa)). Cysteine 341 carries the S-palmitoyl cysteine lipid modification. The residue at position 352 (serine 352) is a Phosphoserine.

It belongs to the G-protein coupled receptor 1 family. Expressed in a subset of neurons of the pre-Botzinger complex. Within the pre-Botzinger complex, there is some overlap with neurons expressing Grpr with some cells expressing only Grpr or Nmbr while some cells express both. Expressed in dorsal root ganglion neurons and mast cells. Expressed in lung.

The protein localises to the cell membrane. Functionally, receptor for neuromedin-B. Contributes to the maintenance of basal sigh rate through signaling in the pre-Botzinger complex, a cluster of several thousand neurons in the ventrolateral medulla responsible for inspiration during respiratory activity. Contributes to the induction of sneezing following exposure to chemical irritants or allergens which causes release of NMB by nasal sensory neurons and activation of NMBR-expressing neurons in the sneeze-evoking region of the brainstem. These in turn activate neurons of the caudal ventral respiratory group, giving rise to the sneezing response. Contributes to induction of acute itch, possibly through its activation on dorsal root ganglion neurons by the NMB peptide. Plays a role in the innate immune response to influenza A virus infection by enhancing interferon alpha expression and reducing expression of IL6. Plays a role in CSF1-induced proliferation of osteoclast precursors by contributing to the positive regulation of the expression of the CSF1 receptor CSF1R. The chain is Neuromedin-B receptor (Nmbr) from Mus musculus (Mouse).